A 391-amino-acid chain; its full sequence is Multidrug resistance protein MdtL (391 aa).

The Cytoplasmic portion of the chain corresponds to 1–3; the sequence is MSR. Residues 4 to 24 form a helical membrane-spanning segment; sequence FLICSFALVLLYPAGIDMYLV. The Periplasmic portion of the chain corresponds to 25 to 37; that stretch reads GLPRIAADLNASE. The chain crosses the membrane as a helical span at residues 38 to 58; the sequence is AQLHIAFSVYLAGMAAAMLFA. Over 59–75 the chain is Cytoplasmic; it reads GKMADRSGRKPVAIPGS. The helical transmembrane segment at 76-96 threads the bilayer; it reads ALFIIASVFCSLAETSTLFLA. Topologically, residues 97–98 are periplasmic; sequence GR. Residues 99–119 form a helical membrane-spanning segment; sequence FLQGLGAGCCYVVAFAILRDT. The Cytoplasmic portion of the chain corresponds to 120–130; it reads LDDRRRAKVLS. A helical transmembrane segment spans residues 131 to 151; that stretch reads LLNGITCIIPVLAPVLGHLIM. Residues 152-157 lie on the Periplasmic side of the membrane; that stretch reads LKFPWQ. A helical membrane pass occupies residues 158–178; that stretch reads SLFWAMAMMGIAVLMLSLFIL. Topologically, residues 179–202 are cytoplasmic; it reads KETRPASPAASDKPRENSESLLNR. Residues 203–222 traverse the membrane as a helical segment; that stretch reads FFLSRVVITTLSVSVILTFV. Residues 223–244 are Periplasmic-facing; it reads NTSPVLLMEIMGFERGEYATIM. The helical transmembrane segment at 245–265 threads the bilayer; sequence ALTAGVSMTFSFSTPFALGIF. Over 266-268 the chain is Cytoplasmic; the sequence is KPR. The helical transmembrane segment at 269–289 threads the bilayer; sequence TLMITSQVLFLAAGITLAVSP. Residues 290–292 lie on the Periplasmic side of the membrane; it reads SHA. The chain crosses the membrane as a helical span at residues 293-313; it reads VSLFGITLICAGFSVGFGVAM. The Cytoplasmic segment spans residues 314–330; that stretch reads SQALGPFSLRAGVASST. The helical transmembrane segment at 331–351 threads the bilayer; the sequence is LGIAQVCGSSLWIWLAAVVGI. Over 352–355 the chain is Periplasmic; the sequence is GAWN. The chain crosses the membrane as a helical span at residues 356-376; the sequence is MLIGILIACSIVSLLLIMFVA. Topologically, residues 377–391 are cytoplasmic; the sequence is PGRPVAAHEEIHHHA.

This sequence belongs to the major facilitator superfamily. DHA1 family. MdtL (TC 2.A.1.2.22) subfamily.

The protein resides in the cell inner membrane. The protein is Multidrug resistance protein MdtL of Shigella flexneri serotype 5b (strain 8401).